Reading from the N-terminus, the 274-residue chain is Rhamnulose-1-phosphate aldolase (274 aa).

E117 is a catalytic residue. H141, H143, and H212 together coordinate Zn(2+).

It belongs to the aldolase class II family. RhaD subfamily. In terms of assembly, homotetramer. Zn(2+) serves as cofactor.

It is found in the cytoplasm. It catalyses the reaction L-rhamnulose 1-phosphate = (S)-lactaldehyde + dihydroxyacetone phosphate. It functions in the pathway carbohydrate degradation; L-rhamnose degradation; glycerone phosphate from L-rhamnose: step 3/3. Its function is as follows. Catalyzes the reversible cleavage of L-rhamnulose-1-phosphate to dihydroxyacetone phosphate (DHAP) and L-lactaldehyde. In Yersinia pseudotuberculosis serotype IB (strain PB1/+), this protein is Rhamnulose-1-phosphate aldolase.